The primary structure comprises 463 residues: Xanthone prenyltransferase B (463 aa).

This sequence belongs to the tryptophan dimethylallyltransferase family.

It participates in secondary metabolite biosynthesis. Mn(2+) and Co(2+) strongly enhance prenylation activity. Functionally, dehydrogenase involved in the conversion of monodictyphenone to the prenyl xanthones such as emericellin, shamixanthone and epishamixanthone. Monodictyphenone is first converted to variecoxanthone A via a paeciloxanthone intermediate by the consecutive actions of the FAD-dependent monooxygenase mdpD and the xanthone prenyltransferase xptB. XptB catalyzes regular O-prenylation at the hydroxy group of C-7 of the xanthone ring. Variecoxanthone A is further prenylated to emericellin by xptA before being reduced to shamixanthone and epishamixanthone by the dehydrogenase xptC. This chain is Xanthone prenyltransferase B, found in Emericella nidulans (strain FGSC A4 / ATCC 38163 / CBS 112.46 / NRRL 194 / M139) (Aspergillus nidulans).